Consider the following 61-residue polypeptide: MDTKLLDILACPLCKGPLKLAEDKSELICKADGLAFPVRDGIPVMLESEARTLDVDERLDK.

The protein belongs to the UPF0434 family.

In Stutzerimonas stutzeri (strain A1501) (Pseudomonas stutzeri), this protein is UPF0434 protein PST_2635.